We begin with the raw amino-acid sequence, 315 residues long: MSEENKQWSISDIEAIYQQPFNDLLYQAHTIHRTYHDPNSLQFATLLSIKTGACPEDCGYCSQSGHYKTHVEKEKLMSVEEVLQCAKEAKEGGAKRFCMGAAWRCPPDKAIPQLKEMIEGVKSLGLETCMTLGMLTKEQASHLKEAGLDYYNHNIDTSPSYYDKVVTTRKFSDRLDTLNNVRSAGINVCCGGILGLGETREDRIEFLLTLANMETPPESVPINRLIPVEGTPLAQAERVEGIELVRTIATARILMPKSAIRLTAGRTEMSDELQALCYFAGANSVFIGDKLLTEDNPQRFKDKTLFNKLGLTEMA.

Residues 39–266 (NSLQFATLLS…KSAIRLTAGR (228 aa)) form the Radical SAM core domain. 3 residues coordinate [4Fe-4S] cluster: C54, C58, and C61. C98, C129, C189, and R261 together coordinate [2Fe-2S] cluster.

It belongs to the radical SAM superfamily. Biotin synthase family. As to quaternary structure, homodimer. [4Fe-4S] cluster serves as cofactor. The cofactor is [2Fe-2S] cluster.

The catalysed reaction is (4R,5S)-dethiobiotin + (sulfur carrier)-SH + 2 reduced [2Fe-2S]-[ferredoxin] + 2 S-adenosyl-L-methionine = (sulfur carrier)-H + biotin + 2 5'-deoxyadenosine + 2 L-methionine + 2 oxidized [2Fe-2S]-[ferredoxin]. It participates in cofactor biosynthesis; biotin biosynthesis; biotin from 7,8-diaminononanoate: step 2/2. Functionally, catalyzes the conversion of dethiobiotin (DTB) to biotin by the insertion of a sulfur atom into dethiobiotin via a radical-based mechanism. This chain is Biotin synthase, found in Legionella pneumophila (strain Corby).